Consider the following 208-residue polypeptide: MVQRSKSSANWLREHFNDPFVKQAQKDGYRSRASYKLLEIQEKDRLIRPGMSVIDLGAAPGGWSQVTSRLIGGQGRLIASDILEMDSIPDVTFIQGDFTQDEVLQQILDAVGDSHVDLVISDMAPNMSGTPEVDMPRAMFLCELALDLATRVLKPGGDFLIKIFQGEGFDMYLKDVRTKFDKVQMRKPSSSRDRSREQYLLGKGFKGA.

5 residues coordinate S-adenosyl-L-methionine: G61, W63, D81, D97, and D122. K162 serves as the catalytic Proton acceptor.

This sequence belongs to the class I-like SAM-binding methyltransferase superfamily. RNA methyltransferase RlmE family.

It localises to the cytoplasm. The enzyme catalyses uridine(2552) in 23S rRNA + S-adenosyl-L-methionine = 2'-O-methyluridine(2552) in 23S rRNA + S-adenosyl-L-homocysteine + H(+). Its function is as follows. Specifically methylates the uridine in position 2552 of 23S rRNA at the 2'-O position of the ribose in the fully assembled 50S ribosomal subunit. The protein is Ribosomal RNA large subunit methyltransferase E of Pseudomonas putida (strain W619).